The chain runs to 126 residues: Holo-[acyl-carrier-protein] synthase (126 aa).

Asp9 and Glu58 together coordinate Mg(2+).

It belongs to the P-Pant transferase superfamily. AcpS family. Mg(2+) is required as a cofactor.

It localises to the cytoplasm. The enzyme catalyses apo-[ACP] + CoA = holo-[ACP] + adenosine 3',5'-bisphosphate + H(+). Its function is as follows. Transfers the 4'-phosphopantetheine moiety from coenzyme A to a Ser of acyl-carrier-protein. The polypeptide is Holo-[acyl-carrier-protein] synthase (Vibrio atlanticus (strain LGP32) (Vibrio splendidus (strain Mel32))).